The chain runs to 462 residues: Arginine-specific demethylase JMJ20 (462 aa).

The JmjC domain maps to 115 to 287 (VKEYPDYTAY…WVWDLLWKDY (173 aa)). The Fe cation site is built by His-177, Asp-179, and His-255.

This sequence belongs to the JARID1 histone demethylase family. Fe(2+) is required as a cofactor. In terms of tissue distribution, mostly expressed in leaves, and, to a lower extent, in inflorescences, roots, siliques and stems.

The protein localises to the nucleus. It carries out the reaction N(omega),N(omega)-dimethyl-L-arginyl-[protein] + 2-oxoglutarate + O2 = N(omega)-methyl-L-arginyl-[protein] + formaldehyde + succinate + CO2. Histone demethylase that demethylates 'Arg-3' (H4R3me) of histone H4 with a specific activity for H4R3me2. Involved in the positive regulation of gene expression. Together with JMJ22, positively regulates seed germination by promoting the removal of repressive histone arginine methylations (e.g. H4R3me2) at GA3ox1 and GA3ox2 to trigger gibberellic acid (GA) biosynthesis. The chain is Arginine-specific demethylase JMJ20 from Arabidopsis thaliana (Mouse-ear cress).